A 674-amino-acid polypeptide reads, in one-letter code: Electrogenic aspartate/glutamate antiporter SLC25A13, mitochondrial (674 aa).

The residue at position 2 (A2) is an N-acetylalanine. The tract at residues 2–295 (AAAKVALTKR…TLADIERIAP (294 aa)) is regulatory N-terminal domain. Topologically, residues 2–331 (AAAKVALTKR…LLQVAESAYR (330 aa)) are mitochondrial intermembrane. EF-hand domains follow at residues 51-86 (SQPN…SVLC), 87-122 (APDA…TTIH), 123-157 (QHIP…FLLE), and 158-193 (IQLE…IRPH). Residues D66, T68, D70, L72, and E77 each contribute to the Ca(2+) site. The segment at 296 to 311 (LEEGTLPFNLAEAQRQ) is linker loop domain. Positions 321–611 (VLLQVAESAY…LQRWFYIDFG (291 aa)) are carrier domain. 3 Solcar repeats span residues 326–418 (AESA…VRDK), 426–510 (VPLA…ARAS), and 518–605 (VSPG…LQRW). A helical membrane pass occupies residues 332-349 (FGLGSVAGAVGATAVYPI). At 350–392 (DLVKTRMQNQRSTGSFVGELMYKNSFDCFKKVLRYEGFFGLYR) the chain is on the mitochondrial matrix side. An N6-acetyllysine mark is found at K353 and K372. The helical transmembrane segment at 393 to 412 (GLLPQLLGVAPEKAIKLTVN) threads the bilayer. Residues 413-435 (DFVRDKFMHKDGSVPLAAEILAG) are Mitochondrial intermembrane-facing. A helical transmembrane segment spans residues 436-449 (GCAGGSQVIFTNPL). Residues 450–484 (EIVKIRLQVAGEITTGPRVSALSVVRDLGFFGIYK) lie on the Mitochondrial matrix side of the membrane. At K453 the chain carries N6-methyllysine. K484 bears the N6-acetyllysine; alternate mark. K484 bears the N6-succinyllysine; alternate mark. The chain crosses the membrane as a helical span at residues 485–504 (GAKACFLRDIPFSAIYFPCY). Residues 505-523 (AHARASFANEDGQVSPGSL) lie on the Mitochondrial intermembrane side of the membrane. A helical transmembrane segment spans residues 524 to 541 (LLAGAIAGMPAASLVTPA). At 542–580 (DVIKTRLQVAARAGQTTYSGVIDCFKKILREEGPKALWK) the chain is on the mitochondrial matrix side. K580 bears the N6-succinyllysine mark. The helical transmembrane segment at 581 to 599 (GAARVFRSSPQFGVTLLTY) threads the bilayer. Residues 600–674 (ELLQRWFYID…PTSEAIGGGP (75 aa)) are Mitochondrial intermembrane-facing. Residues 612–674 (GVKPMGSEPV…PTSEAIGGGP (63 aa)) are C-terminal domain. An N6-acetyllysine modification is found at K661.

The protein belongs to the mitochondrial carrier (TC 2.A.29) family. Homodimer (via N-terminus).

The protein localises to the mitochondrion inner membrane. The enzyme catalyses L-aspartate(in) + L-glutamate(out) + H(+)(out) = L-aspartate(out) + L-glutamate(in) + H(+)(in). It carries out the reaction 3-sulfino-L-alanine(out) + L-glutamate(in) + H(+)(in) = 3-sulfino-L-alanine(in) + L-glutamate(out) + H(+)(out). It catalyses the reaction 3-sulfino-L-alanine(out) + L-aspartate(in) = 3-sulfino-L-alanine(in) + L-aspartate(out). Mitochondrial electrogenic aspartate/glutamate antiporter that favors efflux of aspartate and entry of glutamate and proton within the mitochondria as part of the malate-aspartate shuttle. Also mediates the uptake of L-cysteinesulfinate (3-sulfino-L-alanine) by mitochondria in exchange of L-glutamate and proton. Can also exchange L-cysteinesulfinate with aspartate in their anionic form without any proton translocation. Lacks transport activity towards gamma-aminobutyric acid (GABA). The polypeptide is Electrogenic aspartate/glutamate antiporter SLC25A13, mitochondrial (Macaca fascicularis (Crab-eating macaque)).